A 310-amino-acid polypeptide reads, in one-letter code: tRNA-splicing endonuclease subunit Sen34 (310 aa).

The disordered stretch occupies residues 119 to 177 (GQAAKKQKLEQASGASSSQEAGSSQAAKEDETSDGQASGEQEEAGPSSSQAGPSNGVAP). The segment covering 128-144 (EQASGASSSQEAGSSQA) has biased composition (low complexity). Residues tyrosine 247, histidine 255, and lysine 286 contribute to the active site.

This sequence belongs to the tRNA-intron endonuclease family. TRNA splicing endonuclease is a heterotetramer composed of TSEN2, TSEN15, TSEN34/LENG5 and TSEN54. tRNA splicing endonuclease complex also contains proteins of the pre-mRNA 3'-end processing machinery such as CLP1, CPSF1, CPSF4 and CSTF2.

The protein resides in the nucleus. The protein localises to the nucleolus. The catalysed reaction is pretRNA = a 3'-half-tRNA molecule with a 5'-OH end + a 5'-half-tRNA molecule with a 2',3'-cyclic phosphate end + an intron with a 2',3'-cyclic phosphate and a 5'-hydroxyl terminus.. Its function is as follows. Constitutes one of the two catalytic subunit of the tRNA-splicing endonuclease complex, a complex responsible for identification and cleavage of the splice sites in pre-tRNA. It cleaves pre-tRNA at the 5'- and 3'-splice sites to release the intron. The products are an intron and two tRNA half-molecules bearing 2',3'-cyclic phosphate and 5'-OH termini. There are no conserved sequences at the splice sites, but the intron is invariably located at the same site in the gene, placing the splice sites an invariant distance from the constant structural features of the tRNA body. It probably carries the active site for 3'-splice site cleavage. The tRNA splicing endonuclease is also involved in mRNA processing via its association with pre-mRNA 3'-end processing factors, establishing a link between pre-tRNA splicing and pre-mRNA 3'-end formation, suggesting that the endonuclease subunits function in multiple RNA-processing events. This is tRNA-splicing endonuclease subunit Sen34 (TSEN34) from Homo sapiens (Human).